The sequence spans 270 residues: UPF0354 protein BCG9842_B0431 (270 aa).

It belongs to the UPF0354 family.

The sequence is that of UPF0354 protein BCG9842_B0431 from Bacillus cereus (strain G9842).